Reading from the N-terminus, the 498-residue chain is ATP synthase subunit alpha 1 (498 aa).

Belongs to the ATPase alpha/beta chains family. In terms of assembly, F-type ATPases have 2 components, CF(1) - the catalytic core - and CF(0) - the membrane proton channel. CF(1) has five subunits: alpha(3), beta(3), gamma(1), delta(1), epsilon(1). CF(0) has three main subunits: a(1), b(2) and c(9-12). The alpha and beta chains form an alternating ring which encloses part of the gamma chain. CF(1) is attached to CF(0) by a central stalk formed by the gamma and epsilon chains, while a peripheral stalk is formed by the delta and b chains.

It localises to the cell membrane. The catalysed reaction is ATP + H2O + 4 H(+)(in) = ADP + phosphate + 5 H(+)(out). Produces ATP from ADP in the presence of a proton gradient across the membrane. The alpha chain is a regulatory subunit. The chain is ATP synthase subunit alpha 1 from Listeria monocytogenes serotype 4b (strain F2365).